The chain runs to 375 residues: Trichodiene synthase (375 aa).

The protein belongs to the trichodiene synthase family.

It catalyses the reaction (2E,6E)-farnesyl diphosphate = trichodiene + diphosphate. It functions in the pathway sesquiterpene biosynthesis; trichothecene biosynthesis. In terms of biological role, TS is a member of the terpene cyclase group of enzymes. It catalyzes the isomerization and cyclization of farnesyl pyro-phosphate to form trichodiene, the first cyclic intermediate in the biosynthetic pathway for trichothecenes. It serves to branch trichothecene biosynthesis from the isoprenoid pathway. The chain is Trichodiene synthase (TRI5) from Fusarium asiaticum.